Consider the following 389-residue polypeptide: Sulfate adenylyltransferase (389 aa).

It belongs to the sulfate adenylyltransferase family.

The catalysed reaction is sulfate + ATP + H(+) = adenosine 5'-phosphosulfate + diphosphate. Its pathway is sulfur metabolism; hydrogen sulfide biosynthesis; sulfite from sulfate: step 1/3. The sequence is that of Sulfate adenylyltransferase from Desulforamulus reducens (strain ATCC BAA-1160 / DSM 100696 / MI-1) (Desulfotomaculum reducens).